Here is a 331-residue protein sequence, read N- to C-terminus: Putative sigma L-dependent transcriptional regulator YplP (331 aa).

Residues 12 to 213 (HLIGEHQTFL…LKNAADYMAA (202 aa)) enclose the Sigma-54 factor interaction domain. 95 to 104 (AVRGTLFLDD) provides a ligand contact to ATP.

Its function is as follows. May play a role in cold adaptation. This is Putative sigma L-dependent transcriptional regulator YplP (yplP) from Bacillus subtilis (strain 168).